The primary structure comprises 254 residues: Alcohol dehydrogenase (254 aa).

10-33 contributes to the NAD(+) binding site; the sequence is FVAGLGGIGLDTSREIVKSGPKNL. Substrate is bound at residue S138. The Proton acceptor role is filled by Y151.

It belongs to the short-chain dehydrogenases/reductases (SDR) family. Homodimer.

The catalysed reaction is a primary alcohol + NAD(+) = an aldehyde + NADH + H(+). It catalyses the reaction a secondary alcohol + NAD(+) = a ketone + NADH + H(+). The protein is Alcohol dehydrogenase (Adh1) of Drosophila lacicola (Fruit fly).